Reading from the N-terminus, the 932-residue chain is Protocadherin gamma-A12 (932 aa).

The first 29 residues, 1–29 (MIPARLHRDYKGLVLLGILLGTLWETGCT), serve as a signal peptide directing secretion. 6 Cadherin domains span residues 30–133 (QIRY…APYF), 134–242 (RESE…APAF), 243–347 (AQPE…APEV), 348–452 (VLTS…PPVF), 453–562 (PQAS…APEI), and 570–683 (DGST…SPAN). The Extracellular portion of the chain corresponds to 30 to 692 (QIRYSVPEEL…NSETSDLTLY (663 aa)). N-linked (GlcNAc...) asparagine glycans are attached at residues asparagine 265, asparagine 419, and asparagine 545. Residues 693–713 (LVVAVAAVSCVFLAFVILLLA) traverse the membrane as a helical segment. The Cytoplasmic portion of the chain corresponds to 714–932 (LRLRRWHKSR…KKKSGKKEKK (219 aa)). 2 disordered regions span residues 803–841 (GHGL…WPNN) and 902–932 (ATLT…KEKK). Residues 816–841 (WRFSQAQRPGTSGSQNGDDTGTWPNN) show a composition bias toward polar residues. The span at 922-932 (NKKKSGKKEKK) shows a compositional bias: basic residues.

It is found in the cell membrane. Potential calcium-dependent cell-adhesion protein. May be involved in the establishment and maintenance of specific neuronal connections in the brain. The sequence is that of Protocadherin gamma-A12 (PCDHGA12) from Pan troglodytes (Chimpanzee).